A 54-amino-acid polypeptide reads, in one-letter code: Large ribosomal subunit protein bL33 (54 aa).

The protein belongs to the bacterial ribosomal protein bL33 family.

The sequence is that of Large ribosomal subunit protein bL33 from Stenotrophomonas maltophilia (strain K279a).